The following is a 33-amino-acid chain: Cytochrome b6-f complex subunit 8 (33 aa).

Residues 2-22 (LFTFAWASLAAIFTFSIAMVV) form a helical membrane-spanning segment.

This sequence belongs to the PetN family. In terms of assembly, the 4 large subunits of the cytochrome b6-f complex are cytochrome b6, subunit IV (17 kDa polypeptide, PetD), cytochrome f and the Rieske protein, while the 4 small subunits are PetG, PetL, PetM and PetN. The complex functions as a dimer.

It is found in the cellular thylakoid membrane. Its function is as follows. Component of the cytochrome b6-f complex, which mediates electron transfer between photosystem II (PSII) and photosystem I (PSI), cyclic electron flow around PSI, and state transitions. The polypeptide is Cytochrome b6-f complex subunit 8 (Prochlorococcus marinus (strain MIT 9211)).